The following is a 461-amino-acid chain: Bifunctional protein GlmU (461 aa).

Residues 1–232 (MNLQIIILAA…SFEVQGINNR (232 aa)) are pyrophosphorylase. UDP-N-acetyl-alpha-D-glucosamine contacts are provided by residues 8–11 (LAAG), lysine 22, glutamine 73, and 78–79 (GT). Position 102 (aspartate 102) interacts with Mg(2+). UDP-N-acetyl-alpha-D-glucosamine is bound by residues glycine 142, glutamate 157, and asparagine 230. A Mg(2+)-binding site is contributed by asparagine 230. The segment at 233–253 (QQLQQLERIWQQRAANQLMEK) is linker. Residues 254–461 (GVTLADANRF…WKRPAKRERD (208 aa)) form an N-acetyltransferase region. The UDP-N-acetyl-alpha-D-glucosamine site is built by arginine 336 and lysine 354. Histidine 366 serves as the catalytic Proton acceptor. UDP-N-acetyl-alpha-D-glucosamine is bound by residues tyrosine 369 and asparagine 380. Acetyl-CoA-binding positions include alanine 383, 389 to 390 (NY), serine 408, and alanine 426.

The protein in the N-terminal section; belongs to the N-acetylglucosamine-1-phosphate uridyltransferase family. In the C-terminal section; belongs to the transferase hexapeptide repeat family. In terms of assembly, homotrimer. Requires Mg(2+) as cofactor.

Its subcellular location is the cytoplasm. It catalyses the reaction alpha-D-glucosamine 1-phosphate + acetyl-CoA = N-acetyl-alpha-D-glucosamine 1-phosphate + CoA + H(+). It carries out the reaction N-acetyl-alpha-D-glucosamine 1-phosphate + UTP + H(+) = UDP-N-acetyl-alpha-D-glucosamine + diphosphate. Its pathway is nucleotide-sugar biosynthesis; UDP-N-acetyl-alpha-D-glucosamine biosynthesis; N-acetyl-alpha-D-glucosamine 1-phosphate from alpha-D-glucosamine 6-phosphate (route II): step 2/2. The protein operates within nucleotide-sugar biosynthesis; UDP-N-acetyl-alpha-D-glucosamine biosynthesis; UDP-N-acetyl-alpha-D-glucosamine from N-acetyl-alpha-D-glucosamine 1-phosphate: step 1/1. It participates in bacterial outer membrane biogenesis; LPS lipid A biosynthesis. Catalyzes the last two sequential reactions in the de novo biosynthetic pathway for UDP-N-acetylglucosamine (UDP-GlcNAc). The C-terminal domain catalyzes the transfer of acetyl group from acetyl coenzyme A to glucosamine-1-phosphate (GlcN-1-P) to produce N-acetylglucosamine-1-phosphate (GlcNAc-1-P), which is converted into UDP-GlcNAc by the transfer of uridine 5-monophosphate (from uridine 5-triphosphate), a reaction catalyzed by the N-terminal domain. The chain is Bifunctional protein GlmU from Legionella pneumophila (strain Lens).